The following is an 872-amino-acid chain: Alanine--tRNA ligase (872 aa).

4 residues coordinate Zn(2+): His-561, His-565, Cys-662, and His-666.

Belongs to the class-II aminoacyl-tRNA synthetase family. Zn(2+) serves as cofactor.

The protein resides in the cytoplasm. The catalysed reaction is tRNA(Ala) + L-alanine + ATP = L-alanyl-tRNA(Ala) + AMP + diphosphate. Catalyzes the attachment of alanine to tRNA(Ala) in a two-step reaction: alanine is first activated by ATP to form Ala-AMP and then transferred to the acceptor end of tRNA(Ala). Also edits incorrectly charged Ser-tRNA(Ala) and Gly-tRNA(Ala) via its editing domain. This Thiobacillus denitrificans (strain ATCC 25259 / T1) protein is Alanine--tRNA ligase.